A 398-amino-acid chain; its full sequence is L-methionine gamma-lyase (398 aa).

Residues 59–61 and 89–90 contribute to the pyridoxal 5'-phosphate site; these read YSR and GM. Y114 is a substrate binding site. 208-210 lines the pyridoxal 5'-phosphate pocket; that stretch reads SAT. An N6-(pyridoxal phosphate)lysine modification is found at K211. R375 contacts substrate.

The protein belongs to the trans-sulfuration enzymes family. L-methionine gamma-lyase subfamily. As to quaternary structure, homotetramer; dimer of active dimers. It depends on pyridoxal 5'-phosphate as a cofactor.

It carries out the reaction L-methionine + H2O = methanethiol + 2-oxobutanoate + NH4(+). The enzyme catalyses L-homocysteine + H2O = 2-oxobutanoate + hydrogen sulfide + NH4(+) + H(+). Irreversibly inactivated by DL-propargylglycine. Catalyzes the alpha,gamma-elimination of L-methionine to produce methanethiol, 2-oxobutanoate and ammonia. Is involved in L-methionine catabolism. In fact, shows a multicatalytic function since it also catalyzes gamma-replacement of L-methionine with thiol compounds, alpha,gamma-elimination and gamma-replacement reactions of L-homocysteine and its S-substituted derivatives, O-substituted-L-homoserines and DL-selenomethionine, and, to a lesser extent, alpha,beta-elimination and beta-replacement reactions of L-cysteine, S-methyl-L-cysteine, and O-acetyl-L-serine. Also catalyzes deamination and gamma-addition reactions of L-vinylglycine. Thus, the enzyme is able to cleave C-S, C-Se, and C-O bonds of sulfur, selenium, and oxygen amino acids, respectively. The polypeptide is L-methionine gamma-lyase (Pseudomonas putida (Arthrobacter siderocapsulatus)).